A 154-amino-acid polypeptide reads, in one-letter code: Myoglobin (154 aa).

Residues Gly2–Lys148 form the Globin domain. Ser4 carries the phosphoserine modification. His65 lines the nitrite pocket. An O2-binding site is contributed by His65. A Phosphothreonine modification is found at Thr68. Residue His94 participates in heme b binding.

This sequence belongs to the globin family. In terms of assembly, monomeric.

Its subcellular location is the cytoplasm. The protein resides in the sarcoplasm. The catalysed reaction is Fe(III)-heme b-[protein] + nitric oxide + H2O = Fe(II)-heme b-[protein] + nitrite + 2 H(+). It carries out the reaction H2O2 + AH2 = A + 2 H2O. In terms of biological role, monomeric heme protein which primary function is to store oxygen and facilitate its diffusion within muscle tissues. Reversibly binds oxygen through a pentacoordinated heme iron and enables its timely and efficient release as needed during periods of heightened demand. Depending on the oxidative conditions of tissues and cells, and in addition to its ability to bind oxygen, it also has a nitrite reductase activity whereby it regulates the production of bioactive nitric oxide. Under stress conditions, like hypoxia and anoxia, it also protects cells against reactive oxygen species thanks to its pseudoperoxidase activity. This chain is Myoglobin (MB), found in Sciurus vulgaris (Eurasian red squirrel).